The primary structure comprises 118 residues: MRVAAFHAGLSAERRAAAYLIAKGYRILARRFRTPYGEIDIVARRRQLLAFVEVKARRSLDDAAYAVTRKQQQRIINAAQAWLMAHPEHETFEFRFDAMLIAPRRLPRHLLGAFDAST.

Belongs to the UPF0102 family.

The protein is UPF0102 protein Nwi_0116 of Nitrobacter winogradskyi (strain ATCC 25391 / DSM 10237 / CIP 104748 / NCIMB 11846 / Nb-255).